A 140-amino-acid chain; its full sequence is Large ribosomal subunit protein uL16 (140 aa).

The protein belongs to the universal ribosomal protein uL16 family. Part of the 50S ribosomal subunit.

Functionally, binds 23S rRNA and is also seen to make contacts with the A and possibly P site tRNAs. This chain is Large ribosomal subunit protein uL16, found in Trichlorobacter lovleyi (strain ATCC BAA-1151 / DSM 17278 / SZ) (Geobacter lovleyi).